We begin with the raw amino-acid sequence, 370 residues long: Cytochrome b (370 aa).

4 helical membrane-spanning segments follow: residues 25-45 (FGSMLLACLTLQLLTGFFLAV), 69-90 (WMMQNLHAIGASMFFICIYIHI), 105-125 (WFSGTTLLIMLMATAFFGYVL), and 170-190 (FFALHFILPFGIISLSSLHIL). Heme b is bound by residues His75 and His89. Residues His174 and His188 each contribute to the heme b site. His193 is an a ubiquinone binding site. A run of 4 helical transmembrane segments spans residues 218-238 (YKDMLMLTIMTIMLLTIVSFF), 280-300 (LGGALALTMSIMMLLTLPFTH), 312-332 (FMQLTFWTFTATFLVISWTAT), and 339-358 (FTTISQVAALMYFLFFISNP).

It belongs to the cytochrome b family. The cytochrome bc1 complex contains 3 respiratory subunits (MT-CYB, CYC1 and UQCRFS1), 2 core proteins (UQCRC1 and UQCRC2) and probably 6 low-molecular weight proteins. The cofactor is heme b.

It is found in the mitochondrion inner membrane. Component of the ubiquinol-cytochrome c reductase complex (complex III or cytochrome b-c1 complex) that is part of the mitochondrial respiratory chain. The b-c1 complex mediates electron transfer from ubiquinol to cytochrome c. Contributes to the generation of a proton gradient across the mitochondrial membrane that is then used for ATP synthesis. The chain is Cytochrome b (MT-CYB) from Chilabothrus strigilatus mccraniei (Ragged Island boa constrictor).